The primary structure comprises 363 residues: 3,4-dihydroxy-2-butanone 4-phosphate synthase (363 aa).

The segment at 1 to 201 (MTLSTAQEII…VADLIEYRNK (201 aa)) is DHBP synthase. Residues 27–28 (RE), aspartate 32, 140–144 (RAGHT), and glutamate 164 each bind D-ribulose 5-phosphate. Residue glutamate 28 coordinates Mg(2+). Residue histidine 143 participates in Mg(2+) binding. The interval 202–363 (YETMIERISE…GLEIVEYVCS (162 aa)) is GTP cyclohydrolase II-like.

In the N-terminal section; belongs to the DHBP synthase family. The protein in the C-terminal section; belongs to the GTP cyclohydrolase II family. Mg(2+) is required as a cofactor. Requires Mn(2+) as cofactor.

It carries out the reaction D-ribulose 5-phosphate = (2S)-2-hydroxy-3-oxobutyl phosphate + formate + H(+). The protein operates within cofactor biosynthesis; riboflavin biosynthesis; 2-hydroxy-3-oxobutyl phosphate from D-ribulose 5-phosphate: step 1/1. Catalyzes the conversion of D-ribulose 5-phosphate to formate and 3,4-dihydroxy-2-butanone 4-phosphate. The polypeptide is 3,4-dihydroxy-2-butanone 4-phosphate synthase (ribB) (Photobacterium phosphoreum).